The sequence spans 325 residues: Elongation factor Ts, mitochondrial (325 aa).

A mitochondrion-targeting transit peptide spans 1–45 (MSLLRSLRVFLVARTGSYPAGSLLRQSPQPRHTFYAGPRLSASAS). N6-succinyllysine is present on residues Lys76, Lys133, and Lys192. Phosphoserine is present on Ser270. Position 324 is a phosphothreonine (Thr324).

It belongs to the EF-Ts family. As to expression, expressed in all tissues, with the highest levels of expression in skeletal muscle, liver and kidney.

It localises to the mitochondrion. Its function is as follows. Associates with the EF-Tu.GDP complex and induces the exchange of GDP to GTP. It remains bound to the aminoacyl-tRNA.EF-Tu.GTP complex up to the GTP hydrolysis stage on the ribosome. This chain is Elongation factor Ts, mitochondrial, found in Homo sapiens (Human).